Reading from the N-terminus, the 198-residue chain is Cytochrome c oxidase assembly protein CtaG (198 aa).

At 1–12 (MADNGQADRKER) the chain is on the cytoplasmic side. A helical; Signal-anchor for type II membrane protein transmembrane segment spans residues 13-35 (SNGVIVGTCLAFVAGMIGMAYAA). Residues 36–198 (VPLYDMFCRV…QVKAKAENKL (163 aa)) lie on the Periplasmic side of the membrane.

The protein belongs to the COX11/CtaG family.

The protein resides in the cell inner membrane. Its function is as follows. Exerts its effect at some terminal stage of cytochrome c oxidase synthesis, probably by being involved in the insertion of the copper B into subunit I. The sequence is that of Cytochrome c oxidase assembly protein CtaG from Rhizobium meliloti (strain 1021) (Ensifer meliloti).